Consider the following 376-residue polypeptide: Inactive CLIP domain-containing serine protease A28 (376 aa).

An N-terminal signal peptide occupies residues 1–19; the sequence is MKVLLFCIVISLTTLIASG. Residues 24–80 enclose the Clip domain; sequence EELRCPGGYCVSKYLCPNGTFIDDIKHAQTTQLIGLRAGLDIDDFDDCNDYLLVCCQ. 3 cysteine pairs are disulfide-bonded: Cys28–Cys78, Cys33–Cys71, and Cys39–Cys79. Residue Asn41 is glycosylated (N-linked (GlcNAc...) asparagine). The tract at residues 85–106 is disordered; sequence PTATSTEKPATSDELIEPPPST. The 251-residue stretch at 114–364 folds into the Peptidase S1 domain; it reads NEGGLIYDLR…YVQWLNEHIV (251 aa). N-linked (GlcNAc...) asparagine glycosylation is found at Asn125 and Asn279. Cystine bridges form between Cys251/Cys321, Cys280/Cys301, and Cys311/Cys340. The N-linked (GlcNAc...) asparagine glycan is linked to Asn369.

Belongs to the peptidase S1 family. CLIP subfamily. As to quaternary structure, may form a heterodimer of a light chain and a heavy chain; disulfide-linked. Secreted as a full-length protein. Proteolytically cleaved into two chains which probably remain covalently linked. Cleavage is induced by fungus B.bassiana and Gram-positive or Gram-negative bacteria infection.

It localises to the secreted. Functionally, inactive serine protease which plays an essential role in the innate immune response against bacteria, fungi and protozoa infection by activating the melanization cascade. In the melanization cascade, acts downstream of TEP1, SPCLIP1 and CLIPA8 to promote CLIPC9 proteolytic cleavage. In the susceptible strain G3, appears to be dispensable for parasite P.berghei ookinete elimination which occurs by lysis. Required for the melanization of Gram-positive and Gram-negative bacteria. Required for the melanization of fungus B.bassiana. The polypeptide is Inactive CLIP domain-containing serine protease A28 (Anopheles gambiae (African malaria mosquito)).